A 368-amino-acid chain; its full sequence is Carbamoyl phosphate synthase small chain (368 aa).

The segment at 1-178 (MKAVLGLEDG…GAECAWKGSG (178 aa)) is CPSase. Ser45, Gly230, and Gly232 together coordinate L-glutamine. Residues 182–368 (HAVVVDLGIK…KVVKVLGGDL (187 aa)) form the Glutamine amidotransferase type-1 domain. Cys257 functions as the Nucleophile in the catalytic mechanism. Residues Phe258, Gln261, Asn299, Gly301, and Tyr302 each coordinate L-glutamine. Residues His342 and Glu344 contribute to the active site.

It belongs to the CarA family. Composed of two chains; the small (or glutamine) chain promotes the hydrolysis of glutamine to ammonia, which is used by the large (or ammonia) chain to synthesize carbamoyl phosphate. Tetramer of heterodimers (alpha,beta)4.

It carries out the reaction hydrogencarbonate + L-glutamine + 2 ATP + H2O = carbamoyl phosphate + L-glutamate + 2 ADP + phosphate + 2 H(+). It catalyses the reaction L-glutamine + H2O = L-glutamate + NH4(+). Its pathway is amino-acid biosynthesis; L-arginine biosynthesis; carbamoyl phosphate from bicarbonate: step 1/1. It functions in the pathway pyrimidine metabolism; UMP biosynthesis via de novo pathway; (S)-dihydroorotate from bicarbonate: step 1/3. In terms of biological role, small subunit of the glutamine-dependent carbamoyl phosphate synthetase (CPSase). CPSase catalyzes the formation of carbamoyl phosphate from the ammonia moiety of glutamine, carbonate, and phosphate donated by ATP, constituting the first step of 2 biosynthetic pathways, one leading to arginine and/or urea and the other to pyrimidine nucleotides. The small subunit (glutamine amidotransferase) binds and cleaves glutamine to supply the large subunit with the substrate ammonia. This chain is Carbamoyl phosphate synthase small chain, found in Methanosarcina acetivorans (strain ATCC 35395 / DSM 2834 / JCM 12185 / C2A).